The sequence spans 823 residues: Protein ROOT HAIR DEFECTIVE 3 homolog 2 (823 aa).

Residues 1–688 (MEVPISGGGG…EAHRRSNNWL (688 aa)) lie on the Cytoplasmic side of the membrane. One can recognise a GB1/RHD3-type G domain in the interval 45-260 (GLSYAVVSIV…IAPGGLAADR (216 aa)). 55–62 (GPQGSGKS) is a binding site for GTP. Residues 226 to 246 (LSSYEEKENLFKEQVGQLRQR) adopt a coiled-coil conformation. Residues 689–709 (PPAWTVLLLAILGYNEFIFLL) traverse the membrane as a helical segment. The Lumenal segment spans residues 710–712 (RNP). The helical transmembrane segment at 713-733 (LYLLGLFVAFVVSYAAWLQYD) threads the bilayer. At 734–823 (ITAYFRHGTL…SVGSNSDDES (90 aa)) the chain is on the cytoplasmic side. Residues 770 to 823 (NQKSSSHPPRHRPPLHPQSFRNQAQQQSQAQVQYQAPSSLSSSSSVGSNSDDES) are disordered. A compositionally biased stretch (low complexity) spans 786 to 823 (PQSFRNQAQQQSQAQVQYQAPSSLSSSSSVGSNSDDES).

The protein belongs to the TRAFAC class dynamin-like GTPase superfamily. GB1/RHD3 GTPase family. RHD3 subfamily.

Its subcellular location is the endoplasmic reticulum membrane. In terms of biological role, probable GTP-binding protein that may be involved in cell development. The polypeptide is Protein ROOT HAIR DEFECTIVE 3 homolog 2 (Oryza sativa subsp. japonica (Rice)).